A 911-amino-acid chain; its full sequence is DNA polymerase I (911 aa).

The region spanning 186–280 (VTPAQYPDLA…DTLRLQPWDR (95 aa)) is the 5'-3' exonuclease domain. The 3'-5' exonuclease domain maps to 320 to 497 (RGGLLESGTV…LAAALDAELD (178 aa)).

The protein belongs to the DNA polymerase type-A family. In terms of assembly, single-chain monomer with multiple functions.

It catalyses the reaction DNA(n) + a 2'-deoxyribonucleoside 5'-triphosphate = DNA(n+1) + diphosphate. Functionally, in addition to polymerase activity, this DNA polymerase exhibits 3'-5' and 5'-3' exonuclease activity. This Mycobacterium leprae (strain TN) protein is DNA polymerase I (polA).